Reading from the N-terminus, the 4639-residue chain is Dynein heavy chain, cytoplasmic (4639 aa).

The segment at 1 to 1856 (MGDSLENPDT…TIHMANARFF (1856 aa)) is stem. Coiled-coil stretches lie at residues 530–565 (LDIT…LRDQ), 774–794 (SLIE…DRAS), and 1264–1368 (DDAL…ARLR). 4 AAA regions span residues 1857 to 2084 (YGFE…VLIS), 2166 to 2437 (EEIR…FTRL), 2541 to 2790 (EVET…WVRG), and 2884 to 3153 (VFYE…GGRT). Residues 1895 to 1902 (GPAGTGKT), 2210 to 2217 (GPSGSGKS), 2580 to 2587 (GPPGSGKT), and 2922 to 2929 (GVSGAGKT) contribute to the ATP site. Coiled-coil stretches lie at residues 3189 to 3261 (GLNK…EKRK), 3382 to 3478 (AIAQ…WEST), and 3723 to 3782 (EFRL…EIET). Residues 3189-3478 (GLNKIAETVE…NIERERWEST (290 aa)) are stalk. 2 AAA regions span residues 3539–3768 (LSNP…DINQ) and 3989–4205 (AHNV…TLDT).

The protein belongs to the dynein heavy chain family. As to quaternary structure, consists of at least two heavy chains and a number of intermediate and light chains.

Its subcellular location is the cytoplasm. The protein resides in the cytoskeleton. Cytoplasmic dynein acts as a motor for the intracellular retrograde motility of vesicles and organelles along microtubules. Dynein has ATPase activity; the force-producing power stroke is thought to occur on release of ADP. This chain is Dynein heavy chain, cytoplasmic (Dhc64C), found in Drosophila melanogaster (Fruit fly).